The sequence spans 303 residues: Sushi domain-containing protein 6 (303 aa).

The signal sequence occupies residues 1-39; that stretch reads MCHGRIAPKSTSVFAVASVGHGVFLPLVILCTLLGDGLA. The 65-residue stretch at 40-104 folds into the Sushi domain; the sequence is SVCPLPPEPE…KPAMEISCRL (65 aa). The Extracellular portion of the chain corresponds to 40–120; the sequence is SVCPLPPEPE…HTSLGVPTLS (81 aa). 2 disulfide bridges follow: cysteine 42/cysteine 89 and cysteine 74/cysteine 102. The chain crosses the membrane as a helical span at residues 121 to 141; that stretch reads IVASTASSVALILLLVVLFVL. Over 142-303 the chain is Cytoplasmic; the sequence is LQPKLKSFHH…TDDIPLLKEA (162 aa). Disordered stretches follow at residues 199–237 and 263–282; these read VLSE…GQSG and GSGN…NSDI.

It is found in the membrane. Functionally, may play a role in growth-suppressive activity and cell death. May be involved in the production of chemokine molecules in umbilical vein endothelial cells (HUVECs) cultured in THP1 monocyte LPS-induced medium. Plays a role in preventing tumor onset. The polypeptide is Sushi domain-containing protein 6 (Homo sapiens (Human)).